Here is a 140-residue protein sequence, read N- to C-terminus: Myrosinase 2 (140 aa).

The active-site Nucleophile is the Arg70. N-linked (GlcNAc...) asparagine glycans are attached at residues Asn114 and Asn127.

It belongs to the glycosyl hydrolase 1 family. In terms of assembly, homodimer.

It carries out the reaction a thioglucoside + H2O = a sugar + a thiol.. With respect to regulation, inhibited by ascorbate. Degradation of glucosinolates (glucose residue linked by a thioglucoside bound to an amino acid derivative) to glucose, sulfate and any of the products: thiocyanates, isothiocyanates, nitriles, epithionitriles or oxazolidine-2-thiones. This is Myrosinase 2 from Brevicoryne brassicae (Mealy cabbage aphid).